Consider the following 265-residue polypeptide: uncharacterized protein (265 aa).

Positions 1–160 (MDKSKNLFDL…STEPVVAAPV (160 aa)) are disordered. A compositionally biased stretch (low complexity) spans 28–42 (AAAAPVAAKKPVAPK). Composition is skewed to basic and acidic residues over residues 73–85 (SEER…DSKS) and 102–119 (RQFD…ENKK).

It belongs to the SERBP1-HABP4 family.

Ribosome-binding protein that acts as a regulator of mRNA translation by promoting ribosome inactivation. This is an uncharacterized protein from Dictyostelium discoideum (Social amoeba).